Consider the following 120-residue polypeptide: Testis-expressed protein 48 (120 aa).

The segment covering 29–45 (KVPSQTQEHKPSTQNLL) has biased composition (polar residues). Residues 29–86 (KVPSQTQEHKPSTQNLLLQKDELDRQNPKRINAVSHLPSRTPLIQTKKSTSSSSSEFE) are disordered. The segment covering 74 to 83 (TKKSTSSSSS) has biased composition (low complexity).

The sequence is that of Testis-expressed protein 48 from Homo sapiens (Human).